Here is a 586-residue protein sequence, read N- to C-terminus: Ezrin (586 aa).

Positions 2 to 296 constitute an FERM domain; the sequence is PKPINVRVTT…NHELYMRRRK (295 aa). K60 carries the post-translational modification N6-acetyllysine. Positions 115-120 match the [IL]-x-C-x-x-[DE] motif motif; that stretch reads IYCPPE. At Y146 the chain carries Phosphotyrosine; by PDGFR. Residues 244 to 586 are interaction with SCYL3; that stretch reads EIRNISFNDK…KQRIDEFEAL (343 aa). Residues 302–462 are a coiled coil; the sequence is VQQMKAQARE…QDDLVKTKEE (161 aa). The interval 306–341 is disordered; sequence KAQAREEKHQKQLERQQLETEKKRRETVEREKEQMM. Over residues 308-341 the composition is skewed to basic and acidic residues; that stretch reads QAREEKHQKQLERQQLETEKKRRETVEREKEQMM. At Y354 the chain carries Phosphotyrosine; by PDGFR. S366 is modified (phosphoserine). Residue Y478 is modified to Phosphotyrosine. Residues 485 to 564 are disordered; the sequence is VQESLQDEGA…NENMRQGRDK (80 aa). Residues 507–528 show a composition bias toward basic and acidic residues; that stretch reads GIRDDRNEEKRITEAEKNERVQ. Polar residues predominate over residues 530–539; that stretch reads QLLTLSSELS. A Phosphoserine modification is found at S535. Over residues 540–564 the composition is skewed to basic and acidic residues; that stretch reads QARDENKRTHNDIIHNENMRQGRDK. T567 bears the Phosphothreonine; by ROCK2 and PKC/PRKCI mark.

Monomer. Homodimer. Interacts with PALS1 and NHERF2. Found in a complex with EZR, PODXL and NHERF2. Interacts with MCC, PLEKHG6, PODXL, SCYL3/PACE1, NHERF1 and TMEM8B. Interacts (when phosphorylated) with FES/FPS. Interacts with dimeric S100P, the interaction may be activating through unmasking of F-actin binding sites. Identified in complexes that contain VIM, EZR, AHNAK, BFSP1, BFSP2, ANK2, PLEC, PRX and spectrin. Detected in a complex composed of at least EZR, AHNAK, PPL and PRX. Interacts with PDPN (via cytoplasmic domain); activates RHOA and promotes epithelial-mesenchymal transition. Interacts with SPN/CD43 cytoplasmic tail, CD44 and ICAM2. Interacts with SLC9A3; interaction targets SLC9A3 to the apical membrane. Interacts with SLC9A1; regulates interactions of SLC9A1 with cytoskeletal and promotes stress fiber formation. Interacts with CLIC5; may work together in a complex which also includes RDX and MYO6 to stabilize linkages between the plasma membrane and subjacent actin cytoskeleton at the base of stereocilia. Phosphorylated by tyrosine-protein kinases. Phosphorylation by ROCK2 suppresses the head-to-tail association of the N-terminal and C-terminal halves resulting in an opened conformation which is capable of actin and membrane-binding. Post-translationally, S-nitrosylation is induced by interferon-gamma and oxidatively-modified low-densitity lipoprotein (LDL(ox)) possibly implicating the iNOS-S100A8/9 transnitrosylase complex. In terms of tissue distribution, expressed in cerebral cortex, basal ganglia, hippocampus, hypophysis, and optic nerve. Weakly expressed in brain stem and diencephalon. Stronger expression was detected in gray matter of frontal lobe compared to white matter (at protein level). Component of the microvilli of intestinal epithelial cells. Preferentially expressed in astrocytes of hippocampus, frontal cortex, thalamus, parahippocampal cortex, amygdala, insula, and corpus callosum. Not detected in neurons in most tissues studied.

The protein localises to the apical cell membrane. The protein resides in the cell projection. It localises to the microvillus membrane. Its subcellular location is the ruffle membrane. It is found in the cytoplasm. The protein localises to the cell cortex. The protein resides in the cytoskeleton. It localises to the microvillus. A head-to-tail association, of the N-terminal and C-terminal halves results in a closed conformation (inactive form) which is incapable of actin or membrane-binding. In terms of biological role, probably involved in connections of major cytoskeletal structures to the plasma membrane. In epithelial cells, required for the formation of microvilli and membrane ruffles on the apical pole. Along with PLEKHG6, required for normal macropinocytosis. The polypeptide is Ezrin (EZR) (Homo sapiens (Human)).